A 240-amino-acid chain; its full sequence is RING finger protein 151 (240 aa).

An RING-type zinc finger spans residues 20 to 58 (CSVCHGVLKRPVRLPCSHIFCKKCILRWLARQKTCPCCR). The TRAF-type zinc finger occupies 101 to 156 (GHQDSCPFELMVCPNEGCMLRVPRGALDEHRQNCQHGAYHRCSLGCGATLGPVERA).

The chain is RING finger protein 151 (RNF151) from Bos taurus (Bovine).